Consider the following 115-residue polypeptide: Large ribosomal subunit protein bL19 (115 aa).

This sequence belongs to the bacterial ribosomal protein bL19 family.

Functionally, this protein is located at the 30S-50S ribosomal subunit interface and may play a role in the structure and function of the aminoacyl-tRNA binding site. The polypeptide is Large ribosomal subunit protein bL19 (Buchnera aphidicola subsp. Schizaphis graminum (strain Sg)).